The primary structure comprises 179 residues: TM2 domain-containing protein Y66D12A.21 (179 aa).

Residues 1–18 (MRQLLLTLSLISVSASDA) form the signal peptide. The Extracellular portion of the chain corresponds to 19 to 82 (TVKCDDLDPN…IFNRTVPSAC (64 aa)). Asn-75 carries an N-linked (GlcNAc...) asparagine glycan. Residues 83 to 105 (HYGAHVSYTTTVLLSIFLGFFGI) traverse the membrane as a helical segment. Residues 88-135 (VSYTTTVLLSIFLGFFGIDRIYLGYYALGLIKMFSLGGLFVFWLVDII) form the TM2 domain. Topologically, residues 106 to 109 (DRIY) are cytoplasmic. A helical transmembrane segment spans residues 110–132 (LGYYALGLIKMFSLGGLFVFWLV). The Extracellular portion of the chain corresponds to 133-179 (DIILISLQLLGPADGTAYAMAYYGPKAQMIRFDSHTNFSFYTCDGCL). Residue Asn-169 is glycosylated (N-linked (GlcNAc...) asparagine).

The protein belongs to the TM2 family.

It localises to the membrane. This chain is TM2 domain-containing protein Y66D12A.21, found in Caenorhabditis elegans.